We begin with the raw amino-acid sequence, 238 residues long: Ribonuclease HII (238 aa).

Residues 12 to 197 (GIVAGVDEAG…VLELLTDDLL (186 aa)) enclose the RNase H type-2 domain. A divalent metal cation contacts are provided by Asp-18, Glu-19, and Asp-107.

It belongs to the RNase HII family. Mn(2+) is required as a cofactor. Requires Mg(2+) as cofactor.

The protein localises to the cytoplasm. The enzyme catalyses Endonucleolytic cleavage to 5'-phosphomonoester.. Endonuclease that specifically degrades the RNA of RNA-DNA hybrids. This chain is Ribonuclease HII (rnhB), found in Thermotoga maritima (strain ATCC 43589 / DSM 3109 / JCM 10099 / NBRC 100826 / MSB8).